Consider the following 231-residue polypeptide: Octanoyltransferase (231 aa).

In terms of domain architecture, BPL/LPL catalytic spans 49–231 (SEAAEQVWLL…KRTFSEVFGS (183 aa)). Residues 87 to 94 (RGGQITYH), 162 to 164 (AIG), and 175 to 177 (GVS) each bind substrate. The active-site Acyl-thioester intermediate is the C193.

It belongs to the LipB family.

The protein resides in the cytoplasm. It catalyses the reaction octanoyl-[ACP] + L-lysyl-[protein] = N(6)-octanoyl-L-lysyl-[protein] + holo-[ACP] + H(+). The protein operates within protein modification; protein lipoylation via endogenous pathway; protein N(6)-(lipoyl)lysine from octanoyl-[acyl-carrier-protein]: step 1/2. Its function is as follows. Catalyzes the transfer of endogenously produced octanoic acid from octanoyl-acyl-carrier-protein onto the lipoyl domains of lipoate-dependent enzymes. Lipoyl-ACP can also act as a substrate although octanoyl-ACP is likely to be the physiological substrate. The protein is Octanoyltransferase of Nitrobacter winogradskyi (strain ATCC 25391 / DSM 10237 / CIP 104748 / NCIMB 11846 / Nb-255).